The primary structure comprises 119 residues: Large ribosomal subunit protein uL18 (119 aa).

Positions 1-24 are disordered; the sequence is MITKQDKNQVRKKRHARVRSKISG. Positions 10–20 are enriched in basic residues; it reads VRKKRHARVRS.

This sequence belongs to the universal ribosomal protein uL18 family. As to quaternary structure, part of the 50S ribosomal subunit; part of the 5S rRNA/L5/L18/L25 subcomplex. Contacts the 5S and 23S rRNAs.

Its function is as follows. This is one of the proteins that bind and probably mediate the attachment of the 5S RNA into the large ribosomal subunit, where it forms part of the central protuberance. This chain is Large ribosomal subunit protein uL18, found in Lysinibacillus sphaericus (strain C3-41).